The primary structure comprises 584 residues: DNA mismatch repair protein MutL (584 aa).

The protein belongs to the DNA mismatch repair MutL/HexB family.

Its function is as follows. This protein is involved in the repair of mismatches in DNA. It is required for dam-dependent methyl-directed DNA mismatch repair. May act as a 'molecular matchmaker', a protein that promotes the formation of a stable complex between two or more DNA-binding proteins in an ATP-dependent manner without itself being part of a final effector complex. This is DNA mismatch repair protein MutL from Buchnera aphidicola subsp. Acyrthosiphon pisum (strain Tuc7).